The following is a 502-amino-acid chain: Beta-amyrin 28-monooxygenase CYP716A379 (502 aa).

A helical; Signal-anchor for type II membrane protein transmembrane segment spans residues 3–23 (LITLLSALLVLAIVSLSTFFV). 2 N-linked (GlcNAc...) asparagine glycosylation sites follow: Asn-88 and Asn-181. Cys-444 contacts heme.

Belongs to the cytochrome P450 family. Heme serves as cofactor. Mainly expressed in flowers and flower buds, to a lesser extent in young leaves and, at low levels, in old leaves, stems and roots.

It localises to the membrane. It carries out the reaction beta-amyrin + 3 reduced [NADPH--hemoprotein reductase] + 3 O2 = oleanolate + 3 oxidized [NADPH--hemoprotein reductase] + 4 H2O + 4 H(+). Its pathway is secondary metabolite biosynthesis; terpenoid biosynthesis. In terms of biological role, component of the oleanane-type triterpene saponins (e.g. saponarioside A and saponarioside B) biosynthetic pathway, leading to the production of natural products with detergent properties used as traditional sources of soap. An oxidoreductase that facilitates the oxidation of the methyl group to a carboxyl group at the C-28 position of beta-amyrin, resulting in the formation of oleanolic acid. Catalyzes also the subsequent oxidation of the methyl group to a&lt; carboxyl group at the C-16 alpha position of oleanolic acid, resulting in the formation of echinocystic acid. The polypeptide is Beta-amyrin 28-monooxygenase CYP716A379 (Saponaria officinalis (Common soapwort)).